The chain runs to 212 residues: Uridine kinase (212 aa).

13–20 contacts ATP; that stretch reads GASASGKS.

It belongs to the uridine kinase family.

The protein resides in the cytoplasm. The catalysed reaction is uridine + ATP = UMP + ADP + H(+). It catalyses the reaction cytidine + ATP = CMP + ADP + H(+). It functions in the pathway pyrimidine metabolism; CTP biosynthesis via salvage pathway; CTP from cytidine: step 1/3. The protein operates within pyrimidine metabolism; UMP biosynthesis via salvage pathway; UMP from uridine: step 1/1. This Shewanella oneidensis (strain ATCC 700550 / JCM 31522 / CIP 106686 / LMG 19005 / NCIMB 14063 / MR-1) protein is Uridine kinase.